The following is a 199-amino-acid chain: MVKIGVCGPVGSGKTALIEALTRHMSKDYDMAVITNDIYTKEDAEFMCKNSVMPRDRIIGVETGGCPHTAIREDASMNLEAVEEMHGRFPNLELLLIESGGDNLSATFNPELADFTIFVIDVAEGDKIPRKGGPGITRSDLLVINKIDLAPYVGADLKVMERDSKKMRGEKPFIFTNIRSKEGLDDVIAWIKRNALLED.

8-15 (GPVGSGKT) provides a ligand contact to GTP.

The protein belongs to the SIMIBI class G3E GTPase family. UreG subfamily. In terms of assembly, homodimer. UreH, UreF and UreG form a complex that acts as a GTP-hydrolysis-dependent molecular chaperone, activating the urease apoprotein by helping to assemble the nickel containing metallocenter of UreC. The UreE protein probably delivers the nickel.

The protein resides in the cytoplasm. Functionally, facilitates the functional incorporation of the urease nickel metallocenter. This process requires GTP hydrolysis, probably effectuated by UreG. This is Urease accessory protein UreG from Helicobacter acinonychis (strain Sheeba).